Consider the following 477-residue polypeptide: Bifunctional protein HldE (477 aa).

Residues 1 to 318 (MKVNLPAFER…ENAVRGRAAT (318 aa)) are ribokinase. Residue 195-198 (NLSE) participates in ATP binding. The active site involves D264. The segment at 344–477 (MTNGVFDILH…IKKIQTESEK (134 aa)) is cytidylyltransferase.

This sequence in the N-terminal section; belongs to the carbohydrate kinase PfkB family. In the C-terminal section; belongs to the cytidylyltransferase family. In terms of assembly, homodimer.

The enzyme catalyses D-glycero-beta-D-manno-heptose 7-phosphate + ATP = D-glycero-beta-D-manno-heptose 1,7-bisphosphate + ADP + H(+). The catalysed reaction is D-glycero-beta-D-manno-heptose 1-phosphate + ATP + H(+) = ADP-D-glycero-beta-D-manno-heptose + diphosphate. It functions in the pathway nucleotide-sugar biosynthesis; ADP-L-glycero-beta-D-manno-heptose biosynthesis; ADP-L-glycero-beta-D-manno-heptose from D-glycero-beta-D-manno-heptose 7-phosphate: step 1/4. The protein operates within nucleotide-sugar biosynthesis; ADP-L-glycero-beta-D-manno-heptose biosynthesis; ADP-L-glycero-beta-D-manno-heptose from D-glycero-beta-D-manno-heptose 7-phosphate: step 3/4. Its function is as follows. Catalyzes the phosphorylation of D-glycero-D-manno-heptose 7-phosphate at the C-1 position to selectively form D-glycero-beta-D-manno-heptose-1,7-bisphosphate. Catalyzes the ADP transfer from ATP to D-glycero-beta-D-manno-heptose 1-phosphate, yielding ADP-D-glycero-beta-D-manno-heptose. The protein is Bifunctional protein HldE of Salmonella arizonae (strain ATCC BAA-731 / CDC346-86 / RSK2980).